Here is a 138-residue protein sequence, read N- to C-terminus: Acidic phospholipase A2 2 (138 aa).

A signal peptide spans 1 to 16; the sequence is MRTLWIVAVLLLGVEG. Intrachain disulfides connect Cys42-Cys131, Cys44-Cys60, Cys59-Cys111, Cys65-Cys138, Cys66-Cys104, Cys73-Cys97, and Cys91-Cys102. Ca(2+)-binding residues include Tyr43, Gly45, and Gly47. His63 is an active-site residue. Asp64 is a Ca(2+) binding site. Asp105 is an active-site residue.

The protein belongs to the phospholipase A2 family. Group II subfamily. D49 sub-subfamily. Requires Ca(2+) as cofactor. In terms of tissue distribution, expressed by the venom gland.

The protein localises to the secreted. It catalyses the reaction a 1,2-diacyl-sn-glycero-3-phosphocholine + H2O = a 1-acyl-sn-glycero-3-phosphocholine + a fatty acid + H(+). Functionally, snake venom phospholipase A2 (PLA2) that displays edema-inducing activities, exhibits indirect hemolytic activity, and inhibits ADP-induced platelet aggregation. PLA2 catalyzes the calcium-dependent hydrolysis of the 2-acyl groups in 3-sn-phosphoglycerides. This is Acidic phospholipase A2 2 from Protobothrops mucrosquamatus (Taiwan habu).